Here is a 332-residue protein sequence, read N- to C-terminus: tRNA dimethylallyltransferase (332 aa).

17–24 is a binding site for ATP; sequence GPTCSGKS. 19–24 provides a ligand contact to substrate; the sequence is TCSGKS. Interaction with substrate tRNA regions lie at residues 42-45 and 166-170; these read DSMQ and QRISR.

The protein belongs to the IPP transferase family. In terms of assembly, monomer. Mg(2+) is required as a cofactor.

It catalyses the reaction adenosine(37) in tRNA + dimethylallyl diphosphate = N(6)-dimethylallyladenosine(37) in tRNA + diphosphate. Its function is as follows. Catalyzes the transfer of a dimethylallyl group onto the adenine at position 37 in tRNAs that read codons beginning with uridine, leading to the formation of N6-(dimethylallyl)adenosine (i(6)A). The polypeptide is tRNA dimethylallyltransferase (Gluconobacter oxydans (strain 621H) (Gluconobacter suboxydans)).